A 123-amino-acid polypeptide reads, in one-letter code: Small ribosomal subunit protein uS13 (123 aa).

The tract at residues 97–123 (PVRGQRTRSNARTRKGPRPSRIKKKGK) is disordered. A compositionally biased stretch (basic residues) spans 101 to 123 (QRTRSNARTRKGPRPSRIKKKGK).

It belongs to the universal ribosomal protein uS13 family. As to quaternary structure, part of the 30S ribosomal subunit. Forms a loose heterodimer with protein S19. Forms two bridges to the 50S subunit in the 70S ribosome.

In terms of biological role, located at the top of the head of the 30S subunit, it contacts several helices of the 16S rRNA. In the 70S ribosome it contacts the 23S rRNA (bridge B1a) and protein L5 of the 50S subunit (bridge B1b), connecting the 2 subunits; these bridges are implicated in subunit movement. Contacts the tRNAs in the A and P-sites. This Fervidobacterium nodosum (strain ATCC 35602 / DSM 5306 / Rt17-B1) protein is Small ribosomal subunit protein uS13.